Reading from the N-terminus, the 363-residue chain is MSGNTYGKLFTVTTAGESHGPALVAIVDGCPPGLELSLDDLQRDLDRRKPGTSRHTTQRQEADEVEILSGVFEGRTTGCPIGLLIRNTDQKSKDYSAIKDLFRPAHADYTYHHKYGLRDYRGGGRSSARETAMRVAAGAIAKKYLATLGIQVRGYMSQLGPIEIPFKTWDSVEQNAFFSPDPDNVPELEAYMDQLRRDQDSVGAKITVVAEGVPPGLGEPIFDRLDAELAHALMSINAVKGVEIGAGFASVAQRGTEHRDELTPQGFLSNNAGGILGGISSGQPIVAHLALKPTSSITTPGRSIDVNGEAVDVITKGRHDPCVGIRATPIAEAMMAIVLLDHLLRHRAQNADVQVTTPVLGQL.

Arginine 48 and arginine 54 together coordinate NADP(+). Residues 125-127 (RSS), 237-238 (NA), glycine 277, 292-296 (KPTSS), and arginine 318 contribute to the FMN site.

This sequence belongs to the chorismate synthase family. In terms of assembly, homotetramer. The cofactor is FMNH2.

The catalysed reaction is 5-O-(1-carboxyvinyl)-3-phosphoshikimate = chorismate + phosphate. Its pathway is metabolic intermediate biosynthesis; chorismate biosynthesis; chorismate from D-erythrose 4-phosphate and phosphoenolpyruvate: step 7/7. Functionally, catalyzes the anti-1,4-elimination of the C-3 phosphate and the C-6 proR hydrogen from 5-enolpyruvylshikimate-3-phosphate (EPSP) to yield chorismate, which is the branch point compound that serves as the starting substrate for the three terminal pathways of aromatic amino acid biosynthesis. This reaction introduces a second double bond into the aromatic ring system. In Stutzerimonas stutzeri (strain A1501) (Pseudomonas stutzeri), this protein is Chorismate synthase.